A 182-amino-acid chain; its full sequence is MASITRLDAVSPYLIRRFKNDLRALDAVKQSNCVYVGNLSFYTTEEQIYALFSKCGEIRRIIMGVDRFTKTPCGFCFVEYFENQDALDSLKYISRTSLDERIIRADLDHGYEEGRQYGRGASGGQVRDEMREEFDPGRGGYAKNRQPTSSRQLANYSGISSAPLGSSLELQSNPRYNRWKKN.

Residues Tyr13, Tyr35, 104-108 (RADLD), 115-119 (RQYGR), and 125-126 (QV) each bind mRNA. Residues 32 to 110 (NCVYVGNLSF…RIIRADLDHG (79 aa)) enclose the RRM domain. The disordered stretch occupies residues 114–182 (GRQYGRGASG…NPRYNRWKKN (69 aa)). A compositionally biased stretch (basic and acidic residues) spans 126-136 (VRDEMREEFDP). Over residues 145–175 (RQPTSSRQLANYSGISSAPLGSSLELQSNPR) the composition is skewed to polar residues.

It belongs to the RRM NCBP2 family. In terms of assembly, component of the nuclear cap-binding complex (CBC), a heterodimer composed of cbc1 and cbc2 that interacts with capped RNAs.

It is found in the cytoplasm. The protein localises to the perinuclear region. It localises to the nucleus. Functionally, component of the CBC complex, which binds co-transcriptionally to the 5' cap of pre-mRNAs and is involved in maturation, export and degradation of nuclear mRNAs. This is Nuclear cap-binding protein subunit 2 (cbc2) from Schizosaccharomyces pombe (strain 972 / ATCC 24843) (Fission yeast).